The primary structure comprises 119 residues: MSRRTEKVASLLQQELGAILEKEYPRGGPLLTVVDVKVTADLGLARAYVSIIGSEEQRTAAMEFLRDETKNIRHILSTRIRHQFRRIPELEFFEDRLFEQANRIEELLRSVRKDDGDNA.

It belongs to the RbfA family. In terms of assembly, monomer. Binds 30S ribosomal subunits, but not 50S ribosomal subunits or 70S ribosomes.

The protein resides in the cytoplasm. Its function is as follows. One of several proteins that assist in the late maturation steps of the functional core of the 30S ribosomal subunit. Associates with free 30S ribosomal subunits (but not with 30S subunits that are part of 70S ribosomes or polysomes). Required for efficient processing of 16S rRNA. May interact with the 5'-terminal helix region of 16S rRNA. The chain is Ribosome-binding factor A from Chlorobium luteolum (strain DSM 273 / BCRC 81028 / 2530) (Pelodictyon luteolum).